The sequence spans 951 residues: Glycine dehydrogenase (decarboxylating) 1 (951 aa).

Lys703 carries the N6-(pyridoxal phosphate)lysine modification.

Belongs to the GcvP family. In terms of assembly, the glycine cleavage system is composed of four proteins: P, T, L and H. Requires pyridoxal 5'-phosphate as cofactor.

The catalysed reaction is N(6)-[(R)-lipoyl]-L-lysyl-[glycine-cleavage complex H protein] + glycine + H(+) = N(6)-[(R)-S(8)-aminomethyldihydrolipoyl]-L-lysyl-[glycine-cleavage complex H protein] + CO2. Functionally, the glycine cleavage system catalyzes the degradation of glycine. The P protein binds the alpha-amino group of glycine through its pyridoxal phosphate cofactor; CO(2) is released and the remaining methylamine moiety is then transferred to the lipoamide cofactor of the H protein. This is Glycine dehydrogenase (decarboxylating) 1 (gcvP1) from Pseudomonas putida (strain ATCC 47054 / DSM 6125 / CFBP 8728 / NCIMB 11950 / KT2440).